The chain runs to 388 residues: Na(+)/H(+) antiporter NhaA (388 aa).

Transmembrane regions (helical) follow at residues 14-34 (TIGILLIIATLLALFLENSPL), 59-79 (LLLWVNDGLMAVFFFYVGLEI), 95-115 (TFPAIAALGGMVVPALLFASL), 125-145 (GWAIPTATDIAFALGVLSLLG), 154-174 (VFLMTLAIVDDLGAIIVIALF), 177-197 (TKLSLTSLVVASIALTILFIM), 200-220 (MCVISKGAYILVGVALWVSVL), 222-242 (SGVHATLAGVALALLIPYRIN), 257-277 (GLHLWVNFFILPLFAFANAGV), 295-315 (IMLGLFIGKQLGVFGFGYLAV), 328-348 (LIQFYGVAVLAGIGFTMSLFI), and 362-382 (ADKLAVLIGSLLSGIWGYIVL).

It belongs to the NhaA Na(+)/H(+) (TC 2.A.33) antiporter family.

The protein localises to the cell inner membrane. It carries out the reaction Na(+)(in) + 2 H(+)(out) = Na(+)(out) + 2 H(+)(in). Na(+)/H(+) antiporter that extrudes sodium in exchange for external protons. This Nitratiruptor sp. (strain SB155-2) protein is Na(+)/H(+) antiporter NhaA.